The primary structure comprises 297 residues: Esterase LipU (297 aa).

Active-site residues include serine 140, glutamate 239, and histidine 269.

Belongs to the 'GDXG' lipolytic enzyme family.

Its subcellular location is the secreted. It carries out the reaction a fatty acid ester + H2O = an aliphatic alcohol + a fatty acid + H(+). The catalysed reaction is a butanoate ester + H2O = an aliphatic alcohol + butanoate + H(+). It catalyses the reaction an acetyl ester + H2O = an aliphatic alcohol + acetate + H(+). The enzyme catalyses decanoate ester + H2O = decanoate + an aliphatic alcohol + H(+). It carries out the reaction an octanoate ester + H2O = an aliphatic alcohol + octanoate + H(+). The catalysed reaction is a dodecanoate ester + H2O = an aliphatic alcohol + dodecanoate + H(+). It catalyses the reaction hexadecanoate ester + H2O = an aliphatic alcohol + hexadecanoate + H(+). Its activity is regulated as follows. Inhibited by the ionic detergent SDS and by the serine protease inhibitor PMSF. Inhibited by the FDA approved drugs Diosmin, Acarbose and Ouabain. These drugs remain bound in the active site pocket and could be probable drug candidates to combat TB disease. Its function is as follows. Esterase that shows preference for short chain fatty acids. Contributes to the growth of M.tuberculosis during the nutritive stress. Elicits strong humoral response in both extrapulmonary and relapsed cases of tuberculosis patients. This Mycobacterium tuberculosis (strain ATCC 25618 / H37Rv) protein is Esterase LipU.